The following is a 43-amino-acid chain: Potassium channel toxin gamma-KTx 4.7 (43 aa).

Disulfide bonds link Cys5/Cys23, Cys11/Cys34, Cys20/Cys39, and Cys24/Cys41.

The protein belongs to the ergtoxin family. Gamma-KTx 4 subfamily. Expressed by the venom gland.

The protein resides in the secreted. Functionally, reversibly blocks Kv11/ERG potassium channels. This Centruroides limpidus (Mexican scorpion) protein is Potassium channel toxin gamma-KTx 4.7.